The chain runs to 380 residues: Cytochrome b (380 aa).

Helical transmembrane passes span 34–54, 78–99, 114–134, and 179–199; these read FGSL…LLAM, WLIR…FLHI, WNTG…GYVL, and FFAL…IHLT. Heme b is bound by residues H84 and H98. Heme b-binding residues include H183 and H197. H202 contacts a ubiquinone. The next 4 membrane-spanning stretches (helical) occupy residues 227–247, 289–309, 321–341, and 348–368; these read LKDI…ALFS, LGGV…PFLH, LSQI…WIGS, and FIII…ILFP.

The protein belongs to the cytochrome b family. The cytochrome bc1 complex contains 11 subunits: 3 respiratory subunits (MT-CYB, CYC1 and UQCRFS1), 2 core proteins (UQCRC1 and UQCRC2) and 6 low-molecular weight proteins (UQCRH/QCR6, UQCRB/QCR7, UQCRQ/QCR8, UQCR10/QCR9, UQCR11/QCR10 and a cleavage product of UQCRFS1). This cytochrome bc1 complex then forms a dimer. It depends on heme b as a cofactor.

It localises to the mitochondrion inner membrane. In terms of biological role, component of the ubiquinol-cytochrome c reductase complex (complex III or cytochrome b-c1 complex) that is part of the mitochondrial respiratory chain. The b-c1 complex mediates electron transfer from ubiquinol to cytochrome c. Contributes to the generation of a proton gradient across the mitochondrial membrane that is then used for ATP synthesis. This chain is Cytochrome b (MT-CYB), found in Polyplectron bicalcaratum (Grey peacock-pheasant).